The sequence spans 123 residues: Small ribosomal subunit protein uS12 (123 aa).

Positions 1 to 30 (MPTIQQLIRKPRQPKIKRSKSQHMEGCPQK) are disordered. Residues 9 to 21 (RKPRQPKIKRSKS) are compositionally biased toward basic residues. 3-methylthioaspartic acid is present on D89. The interval 104–123 (TQGVKDRRQRRSKYGAKRPK) is disordered. Positions 110 to 123 (RRQRRSKYGAKRPK) are enriched in basic residues.

It belongs to the universal ribosomal protein uS12 family. In terms of assembly, part of the 30S ribosomal subunit. Contacts proteins S8 and S17. May interact with IF1 in the 30S initiation complex.

Its function is as follows. With S4 and S5 plays an important role in translational accuracy. In terms of biological role, interacts with and stabilizes bases of the 16S rRNA that are involved in tRNA selection in the A site and with the mRNA backbone. Located at the interface of the 30S and 50S subunits, it traverses the body of the 30S subunit contacting proteins on the other side and probably holding the rRNA structure together. The combined cluster of proteins S8, S12 and S17 appears to hold together the shoulder and platform of the 30S subunit. The sequence is that of Small ribosomal subunit protein uS12 from Jannaschia sp. (strain CCS1).